The chain runs to 291 residues: m-AAA protease-interacting protein 1, mitochondrial (291 aa).

The transit peptide at 1 to 96 (MALAARLLPL…SLPASPIRSY (96 aa)) directs the protein to the mitochondrion.

In terms of assembly, interacts with AFG3L2. Interacts with SPG7. Interacts with SMDT1/EMRE (via the N-terminal transit peptide); interaction is direct and takes place before maturation of SMDT1/EMRE.

Its subcellular location is the mitochondrion matrix. In terms of biological role, promotes sorting of SMDT1/EMRE in mitochondria by ensuring its maturation. Interacts with the transit peptide region of SMDT1/EMRE precursor protein in the mitochondrial matrix, leading to protect it against protein degradation by YME1L1, thereby ensuring SMDT1/EMRE maturation by the mitochondrial processing peptidase (PMPCA and PMPCB). In Rattus norvegicus (Rat), this protein is m-AAA protease-interacting protein 1, mitochondrial.